Here is a 206-residue protein sequence, read N- to C-terminus: Recombination protein RecR (206 aa).

A C4-type zinc finger spans residues 60 to 75; it reads CARCNTFCEGGLCDIC. Residues 83-178 enclose the Toprim domain; sequence RRLMVVHMPA…KVSRLSQGIP (96 aa).

Belongs to the RecR family.

May play a role in DNA repair. It seems to be involved in an RecBC-independent recombinational process of DNA repair. It may act with RecF and RecO. This Neisseria gonorrhoeae (strain NCCP11945) protein is Recombination protein RecR.